We begin with the raw amino-acid sequence, 454 residues long: tRNA-2-methylthio-N(6)-dimethylallyladenosine synthase (454 aa).

An MTTase N-terminal domain is found at 6 to 122; sequence RHYHITTFGC…LKDLLESVFD (117 aa). 6 residues coordinate [4Fe-4S] cluster: Cys-15, Cys-51, Cys-85, Cys-157, Cys-161, and Cys-164. A Radical SAM core domain is found at 143-381; it reads RDSKVTAWVN…HLGNLKVAER (239 aa). Positions 383–447 constitute a TRAM domain; that stretch reads QRYFGRIEEV…PFSLTGQPVE (65 aa).

The protein belongs to the methylthiotransferase family. MiaB subfamily. Monomer. [4Fe-4S] cluster serves as cofactor.

The protein resides in the cytoplasm. The enzyme catalyses N(6)-dimethylallyladenosine(37) in tRNA + (sulfur carrier)-SH + AH2 + 2 S-adenosyl-L-methionine = 2-methylsulfanyl-N(6)-dimethylallyladenosine(37) in tRNA + (sulfur carrier)-H + 5'-deoxyadenosine + L-methionine + A + S-adenosyl-L-homocysteine + 2 H(+). Its function is as follows. Catalyzes the methylthiolation of N6-(dimethylallyl)adenosine (i(6)A), leading to the formation of 2-methylthio-N6-(dimethylallyl)adenosine (ms(2)i(6)A) at position 37 in tRNAs that read codons beginning with uridine. This Nostoc punctiforme (strain ATCC 29133 / PCC 73102) protein is tRNA-2-methylthio-N(6)-dimethylallyladenosine synthase.